The following is a 196-amino-acid chain: Pyridoxal 5'-phosphate synthase subunit PdxT (196 aa).

Gly-52 to Ser-54 is an L-glutamine binding site. Cys-84 acts as the Nucleophile in catalysis. L-glutamine contacts are provided by residues Arg-113 and Ile-141–Arg-142. Active-site charge relay system residues include His-178 and Glu-180.

Belongs to the glutaminase PdxT/SNO family. As to quaternary structure, in the presence of PdxS, forms a dodecamer of heterodimers. Only shows activity in the heterodimer.

The enzyme catalyses aldehydo-D-ribose 5-phosphate + D-glyceraldehyde 3-phosphate + L-glutamine = pyridoxal 5'-phosphate + L-glutamate + phosphate + 3 H2O + H(+). It carries out the reaction L-glutamine + H2O = L-glutamate + NH4(+). Its pathway is cofactor biosynthesis; pyridoxal 5'-phosphate biosynthesis. Its function is as follows. Catalyzes the hydrolysis of glutamine to glutamate and ammonia as part of the biosynthesis of pyridoxal 5'-phosphate. The resulting ammonia molecule is channeled to the active site of PdxS. The protein is Pyridoxal 5'-phosphate synthase subunit PdxT of Pyrococcus abyssi (strain GE5 / Orsay).